The following is a 680-amino-acid chain: DNA-directed RNA polymerase subunit beta' (680 aa).

Residues Cys-69, Cys-71, Cys-87, and Cys-90 each coordinate Zn(2+). Mg(2+) is bound by residues Asp-489, Asp-491, and Asp-493.

This sequence belongs to the RNA polymerase beta' chain family. RpoC1 subfamily. In terms of assembly, in plastids the minimal PEP RNA polymerase catalytic core is composed of four subunits: alpha, beta, beta', and beta''. When a (nuclear-encoded) sigma factor is associated with the core the holoenzyme is formed, which can initiate transcription. Mg(2+) is required as a cofactor. The cofactor is Zn(2+).

It is found in the plastid. The protein localises to the chloroplast. It carries out the reaction RNA(n) + a ribonucleoside 5'-triphosphate = RNA(n+1) + diphosphate. DNA-dependent RNA polymerase catalyzes the transcription of DNA into RNA using the four ribonucleoside triphosphates as substrates. In Ceratophyllum demersum (Rigid hornwort), this protein is DNA-directed RNA polymerase subunit beta'.